Here is a 270-residue protein sequence, read N- to C-terminus: Phosphatidylglycerol--prolipoprotein diacylglyceryl transferase (270 aa).

4 helical membrane-spanning segments follow: residues 19–39 (FPVY…LWLA), 56–76 (LVLI…VIFE), 92–112 (QGGL…ILFA), and 116–136 (GVSF…GQAI). Arg138 contacts a 1,2-diacyl-sn-glycero-3-phospho-(1'-sn-glycerol). 3 helical membrane-spanning segments follow: residues 178 to 198 (HPTF…LLAL), 206 to 226 (GELF…VEGL), and 236 to 256 (LRIA…FIIV).

The protein belongs to the Lgt family.

The protein resides in the cell membrane. It catalyses the reaction L-cysteinyl-[prolipoprotein] + a 1,2-diacyl-sn-glycero-3-phospho-(1'-sn-glycerol) = an S-1,2-diacyl-sn-glyceryl-L-cysteinyl-[prolipoprotein] + sn-glycerol 1-phosphate + H(+). It participates in protein modification; lipoprotein biosynthesis (diacylglyceryl transfer). In terms of biological role, catalyzes the transfer of the diacylglyceryl group from phosphatidylglycerol to the sulfhydryl group of the N-terminal cysteine of a prolipoprotein, the first step in the formation of mature lipoproteins. This is Phosphatidylglycerol--prolipoprotein diacylglyceryl transferase from Bacillus thuringiensis subsp. konkukian (strain 97-27).